Here is a 1040-residue protein sequence, read N- to C-terminus: FHF complex subunit HOOK-interacting protein 1A (1040 aa).

Disordered stretches follow at residues Pro555–Pro613, Ser653–Pro746, and Leu769–Glu808. The span at Ser653 to Ala664 shows a compositional bias: basic and acidic residues. The segment covering Val677–Glu690 has biased composition (polar residues). Basic and acidic residues-rich tracts occupy residues Glu696 to Glu719 and Thr783 to Leu804.

This sequence belongs to the FHIP family. In terms of assembly, may be a component of the FTS/Hook/FHIP complex (FHF complex), composed of AKTIP/FTS, FHIP1B, and one or more members of the Hook family of proteins HOOK1, HOOK2, and HOOK3. May interact directly with AKTIP/FTS.

Probable component of the FTS/Hook/FHIP complex (FHF complex). FHF complex promotes the distribution of AP-4 complex to the perinuclear area of the cell. This chain is FHF complex subunit HOOK-interacting protein 1A, found in Homo sapiens (Human).